An 831-amino-acid polypeptide reads, in one-letter code: Translation initiation factor IF-2 (831 aa).

One can recognise a tr-type G domain in the interval T329–K499. A G1 region spans residues G338–T345. G338–T345 lines the GTP pocket. The segment at G363–H367 is G2. The segment at D385–G388 is G3. Residues D385–H389 and N439–D442 each bind GTP. The interval N439 to D442 is G4. Residues S475–L477 are G5.

This sequence belongs to the TRAFAC class translation factor GTPase superfamily. Classic translation factor GTPase family. IF-2 subfamily.

Its subcellular location is the cytoplasm. One of the essential components for the initiation of protein synthesis. Protects formylmethionyl-tRNA from spontaneous hydrolysis and promotes its binding to the 30S ribosomal subunits. Also involved in the hydrolysis of GTP during the formation of the 70S ribosomal complex. The polypeptide is Translation initiation factor IF-2 (Rickettsia massiliae (strain Mtu5)).